The primary structure comprises 459 residues: Ribulose bisphosphate carboxylase (459 aa).

A substrate-binding site is contributed by N111. The active-site Proton acceptor is the K166. Substrate is bound at residue K168. Residues K191, D193, and E194 each contribute to the Mg(2+) site. K191 is modified (N6-carboxylysine). H287 (proton acceptor) is an active-site residue. The substrate site is built by R288, H321, and S368.

It belongs to the RuBisCO large chain family. Type II subfamily. As to quaternary structure, homodimer. Requires Mg(2+) as cofactor.

It carries out the reaction 2 (2R)-3-phosphoglycerate + 2 H(+) = D-ribulose 1,5-bisphosphate + CO2 + H2O. The enzyme catalyses D-ribulose 1,5-bisphosphate + O2 = 2-phosphoglycolate + (2R)-3-phosphoglycerate + 2 H(+). Functionally, ruBisCO catalyzes two reactions: the carboxylation of D-ribulose 1,5-bisphosphate, the primary event in carbon dioxide fixation, as well as the oxidative fragmentation of the pentose substrate. Both reactions occur simultaneously and in competition at the same active site. The polypeptide is Ribulose bisphosphate carboxylase (Cereibacter sphaeroides (strain ATCC 17029 / ATH 2.4.9) (Rhodobacter sphaeroides)).